The following is a 466-amino-acid chain: Ribosomal protein uS12 methylthiotransferase RimO (466 aa).

Positions 15–125 constitute an MTTase N-terminal domain; the sequence is PKVGFVSLGC…VMEAVHAALP (111 aa). [4Fe-4S] cluster contacts are provided by C24, C60, C89, C156, C160, and C163. Residues 142–380 form the Radical SAM core domain; it reads LTPRHYAYLK…AKQAEISALR (239 aa). The 69-residue stretch at 382–450 folds into the TRAM domain; the sequence is EAKIGSVQQC…EHDLFGDALP (69 aa).

Belongs to the methylthiotransferase family. RimO subfamily. [4Fe-4S] cluster serves as cofactor.

It is found in the cytoplasm. It catalyses the reaction L-aspartate(89)-[ribosomal protein uS12]-hydrogen + (sulfur carrier)-SH + AH2 + 2 S-adenosyl-L-methionine = 3-methylsulfanyl-L-aspartate(89)-[ribosomal protein uS12]-hydrogen + (sulfur carrier)-H + 5'-deoxyadenosine + L-methionine + A + S-adenosyl-L-homocysteine + 2 H(+). Catalyzes the methylthiolation of an aspartic acid residue of ribosomal protein uS12. This Xanthomonas oryzae pv. oryzae (strain MAFF 311018) protein is Ribosomal protein uS12 methylthiotransferase RimO.